The chain runs to 316 residues: DNA-directed RNA polymerase subunit alpha (316 aa).

Positions M1 to T230 are alpha N-terminal domain (alpha-NTD). The alpha C-terminal domain (alpha-CTD) stretch occupies residues K247–D316.

The protein belongs to the RNA polymerase alpha chain family. As to quaternary structure, homodimer. The RNAP catalytic core consists of 2 alpha, 1 beta, 1 beta' and 1 omega subunit. When a sigma factor is associated with the core the holoenzyme is formed, which can initiate transcription.

It carries out the reaction RNA(n) + a ribonucleoside 5'-triphosphate = RNA(n+1) + diphosphate. DNA-dependent RNA polymerase catalyzes the transcription of DNA into RNA using the four ribonucleoside triphosphates as substrates. The protein is DNA-directed RNA polymerase subunit alpha of Levilactobacillus brevis (strain ATCC 367 / BCRC 12310 / CIP 105137 / JCM 1170 / LMG 11437 / NCIMB 947 / NCTC 947) (Lactobacillus brevis).